Consider the following 401-residue polypeptide: Imidazolonepropionase (401 aa).

Fe(3+) is bound by residues histidine 70 and histidine 72. 2 residues coordinate Zn(2+): histidine 70 and histidine 72. 3 residues coordinate 4-imidazolone-5-propanoate: arginine 79, tyrosine 142, and histidine 175. N-formimidoyl-L-glutamate is bound at residue tyrosine 142. Residue histidine 238 participates in Fe(3+) binding. Histidine 238 provides a ligand contact to Zn(2+). Glutamine 241 provides a ligand contact to 4-imidazolone-5-propanoate. Position 313 (aspartate 313) interacts with Fe(3+). Aspartate 313 provides a ligand contact to Zn(2+). The N-formimidoyl-L-glutamate site is built by asparagine 315 and glycine 317. Residue threonine 318 participates in 4-imidazolone-5-propanoate binding.

Belongs to the metallo-dependent hydrolases superfamily. HutI family. It depends on Zn(2+) as a cofactor. The cofactor is Fe(3+).

The protein resides in the cytoplasm. It catalyses the reaction 4-imidazolone-5-propanoate + H2O = N-formimidoyl-L-glutamate. It functions in the pathway amino-acid degradation; L-histidine degradation into L-glutamate; N-formimidoyl-L-glutamate from L-histidine: step 3/3. Functionally, catalyzes the hydrolytic cleavage of the carbon-nitrogen bond in imidazolone-5-propanoate to yield N-formimidoyl-L-glutamate. It is the third step in the universal histidine degradation pathway. The protein is Imidazolonepropionase of Xanthomonas oryzae pv. oryzae (strain MAFF 311018).